The chain runs to 321 residues: Lipoyl synthase (321 aa).

Residues Cys68, Cys73, Cys79, Cys94, Cys98, Cys101, and Ser308 each contribute to the [4Fe-4S] cluster site. The 218-residue stretch at Phe80 to Thr297 folds into the Radical SAM core domain.

It belongs to the radical SAM superfamily. Lipoyl synthase family. It depends on [4Fe-4S] cluster as a cofactor.

The protein localises to the cytoplasm. The catalysed reaction is [[Fe-S] cluster scaffold protein carrying a second [4Fe-4S](2+) cluster] + N(6)-octanoyl-L-lysyl-[protein] + 2 oxidized [2Fe-2S]-[ferredoxin] + 2 S-adenosyl-L-methionine + 4 H(+) = [[Fe-S] cluster scaffold protein] + N(6)-[(R)-dihydrolipoyl]-L-lysyl-[protein] + 4 Fe(3+) + 2 hydrogen sulfide + 2 5'-deoxyadenosine + 2 L-methionine + 2 reduced [2Fe-2S]-[ferredoxin]. It functions in the pathway protein modification; protein lipoylation via endogenous pathway; protein N(6)-(lipoyl)lysine from octanoyl-[acyl-carrier-protein]: step 2/2. Catalyzes the radical-mediated insertion of two sulfur atoms into the C-6 and C-8 positions of the octanoyl moiety bound to the lipoyl domains of lipoate-dependent enzymes, thereby converting the octanoylated domains into lipoylated derivatives. This Vibrio cholerae serotype O1 (strain ATCC 39541 / Classical Ogawa 395 / O395) protein is Lipoyl synthase.